The sequence spans 285 residues: Putative quercetin 2,3-dioxygenase PA3240 (285 aa).

Residues His-60, His-62, His-104, and Glu-106 each coordinate a divalent metal cation.

It belongs to the pirin family. A divalent metal cation is required as a cofactor.

The catalysed reaction is quercetin + O2 = 2-(3,4-dihydroxybenzoyloxy)-4,6-dihydroxybenzoate + CO. The protein operates within flavonoid metabolism; quercetin degradation. Its function is as follows. Putative quercetin 2,3-dioxygenase. The sequence is that of Putative quercetin 2,3-dioxygenase PA3240 from Pseudomonas aeruginosa (strain ATCC 15692 / DSM 22644 / CIP 104116 / JCM 14847 / LMG 12228 / 1C / PRS 101 / PAO1).